Reading from the N-terminus, the 180-residue chain is Translation initiation factor IF-3 (180 aa).

It belongs to the IF-3 family. As to quaternary structure, monomer.

The protein resides in the cytoplasm. In terms of biological role, IF-3 binds to the 30S ribosomal subunit and shifts the equilibrium between 70S ribosomes and their 50S and 30S subunits in favor of the free subunits, thus enhancing the availability of 30S subunits on which protein synthesis initiation begins. This Escherichia coli (strain K12 / MC4100 / BW2952) protein is Translation initiation factor IF-3.